The sequence spans 748 residues: Sulfhydryl oxidase 1 (748 aa).

Positions 1-32 (MRRCGRLSGPPSLLLLLLLLSPLLFSGPGAYA) are cleaved as a signal peptide. A Thioredoxin domain is found at 33–159 (ARLSVLYSSS…RMRLIDALES (127 aa)). Active-site nucleophile residues include Cys-73 and Cys-76. Disulfide bonds link Cys-73–Cys-76 and Cys-104–Cys-113. Asn-133 and Asn-246 each carry an N-linked (GlcNAc...) asparagine glycan. A disulfide bridge links Cys-396 with Cys-408. The 108-residue stretch at 399–506 (SEPHFRGFPC…EDPHFPKVQW (108 aa)) folds into the ERV/ALR sulfhydryl oxidase domain. FAD-binding positions include Arg-404, Trp-411, His-415, Asp-454, His-458, 481 to 488 (WTSHNRVN), Lys-503, and Trp-506. A disulfide bond links Cys-452 and Cys-455. The cysteines at positions 512 and 515 are disulfide-linked. Positions 581 to 647 (GHEQAASAES…QENAPGQQHL (67 aa)) are disordered. A compositionally biased stretch (basic and acidic residues) spans 628-638 (ERMEDHQRDMQ). Residues 711–731 (ISLCVGLYSVSFMGLLAMYTY) form a helical membrane-spanning segment.

This sequence belongs to the quiescin-sulfhydryl oxidase (QSOX) family. As to quaternary structure, monomer. FAD is required as a cofactor. Post-translationally, N-glycosylated. O-glycosylated on Thr and Ser residues. In terms of tissue distribution, detected in skin (at protein level). Expressed in the seminal vesicles and skin.

The protein resides in the golgi apparatus membrane. It localises to the secreted. The catalysed reaction is 2 R'C(R)SH + O2 = R'C(R)S-S(R)CR' + H2O2. Functionally, catalyzes the oxidation of sulfhydryl groups in peptide and protein thiols to disulfides with the reduction of oxygen to hydrogen peroxide. Plays a role in disulfide bond formation in a variety of extracellular proteins. In fibroblasts, required for normal incorporation of laminin into the extracellular matrix, and thereby for normal cell-cell adhesion and cell migration. The chain is Sulfhydryl oxidase 1 (Qsox1) from Mus musculus (Mouse).